Here is a 410-residue protein sequence, read N- to C-terminus: LL-diaminopimelate aminotransferase (410 aa).

2 residues coordinate substrate: Y15 and G42. Pyridoxal 5'-phosphate is bound by residues Y72, 108-109 (AK), Y132, N188, Y219, and 247-249 (SFS). Substrate is bound by residues K109, Y132, and N188. At K250 the chain carries N6-(pyridoxal phosphate)lysine. 2 residues coordinate pyridoxal 5'-phosphate: R258 and N293. N293 and R389 together coordinate substrate.

This sequence belongs to the class-I pyridoxal-phosphate-dependent aminotransferase family. LL-diaminopimelate aminotransferase subfamily. In terms of assembly, homodimer. It depends on pyridoxal 5'-phosphate as a cofactor.

The enzyme catalyses (2S,6S)-2,6-diaminopimelate + 2-oxoglutarate = (S)-2,3,4,5-tetrahydrodipicolinate + L-glutamate + H2O + H(+). Its pathway is amino-acid biosynthesis; L-lysine biosynthesis via DAP pathway; LL-2,6-diaminopimelate from (S)-tetrahydrodipicolinate (aminotransferase route): step 1/1. Functionally, involved in the synthesis of meso-diaminopimelate (m-DAP or DL-DAP), required for both lysine and peptidoglycan biosynthesis. Catalyzes the direct conversion of tetrahydrodipicolinate to LL-diaminopimelate. In Bacteroides thetaiotaomicron (strain ATCC 29148 / DSM 2079 / JCM 5827 / CCUG 10774 / NCTC 10582 / VPI-5482 / E50), this protein is LL-diaminopimelate aminotransferase.